The following is a 309-amino-acid chain: Prepilin leader peptidase/N-methyltransferase (309 aa).

The chain crosses the membrane as a helical span at residues 35–55; the sequence is MQLAFAIVLGLVVGSFLNVVV. The Zn(2+) site is built by Cys-96, Cys-99, Cys-121, and Cys-124. 6 helical membrane-spanning segments follow: residues 147-167, 183-203, 207-227, 230-250, 253-273, and 288-308; these read LALF…AALL, LTLP…FASL, VIGA…FKLL, IEGI…WLGW, LPQV…VATW, and FLAA…LLLG.

The protein belongs to the peptidase A24 family. It depends on Zn(2+) as a cofactor.

The protein resides in the cell inner membrane. It carries out the reaction Typically cleaves a -Gly-|-Phe- bond to release an N-terminal, basic peptide of 5-8 residues from type IV prepilin, and then N-methylates the new N-terminal amino group, the methyl donor being S-adenosyl-L-methionine.. Its function is as follows. Plays an essential role in type IV pili and type II pseudopili formation by proteolytically removing the leader sequence from substrate proteins and subsequently monomethylating the alpha-amino group of the newly exposed N-terminal phenylalanine. The chain is Prepilin leader peptidase/N-methyltransferase (gspO) from Burkholderia pseudomallei (strain 1026b).